The primary structure comprises 481 residues: Protein NRT1/ PTR FAMILY 1.3 (481 aa).

The next 12 helical transmembrane spans lie at 32–52 (LAYFGLVPNMILFLTVEYGMG), 57–77 (ANILFLWSAATNFFPLVGAFI), 88–108 (IGFGSSISLTGMVLLWLTTII), 124–144 (LLKSVLLYSFFALTAIGAGGV), 173–193 (FNWYYFSVMVACFLSQSLLVF), 202–222 (IGFGVSVAAMALSVALFFAAS), 259–279 (IWSTGIILSLVTACQVSFIVL), 302–322 (IFLVISFLLFLGLYDLVIVPL), 333–353 (LGVMVRMWAGYVISVLCISAL), 374–394 (AMWLLPYMILGGIAEALNTIA), 422–442 (ASLISSWIITIVDVTTYGSWI), and 451–471 (LDYYYWLLVGLSLLNVLYFVW).

Belongs to the major facilitator superfamily. Proton-dependent oligopeptide transporter (POT/PTR) (TC 2.A.17) family. As to expression, expressed in roots.

The protein resides in the membrane. In Arabidopsis thaliana (Mouse-ear cress), this protein is Protein NRT1/ PTR FAMILY 1.3 (NPF1.3).